Reading from the N-terminus, the 223-residue chain is Killer cell lectin-like receptor subfamily B member 1B allele C (223 aa).

Over 1–45 (MDTAVVYADLHLARTGEPKRESPPSLSPDTCQCPRWHRLALKLGC) the chain is Cytoplasmic. Positions 5 to 10 (VVYADL) match the ITIM motif motif. The short motif at 31 to 34 (CQCP) is the LCK-binding motif element. The chain crosses the membrane as a helical; Signal-anchor for type II membrane protein span at residues 46–66 (ACFILLVLSVIGLGVLVLTLL). The Extracellular portion of the chain corresponds to 67–223 (QKPLLQNSPA…LKRESTCNDS (157 aa)). Residues 101–211 (HRDKCFHVSQ…CDSDNIWICQ (111 aa)) form the C-type lectin domain. Intrachain disulfides connect cysteine 122-cysteine 210 and cysteine 189-cysteine 202.

As to quaternary structure, homodimer; disulfide-linked. Interacts with tyrosine kinase LCK. Binds PTPN6/SHP-1 in a phosphorylation-dependent manner. Expressed in a subset of natural killer cells.

It localises to the membrane. In terms of biological role, receptor for CLEC2D/OCIL. Ligand-binding contributes to inhibition of cytotoxic natural killer (NK) cells. May mediate MHC class I-independent 'missing-self' recognition of allografts, tumor cells and virus-infected cells. This chain is Killer cell lectin-like receptor subfamily B member 1B allele C, found in Rattus norvegicus (Rat).